The following is a 505-amino-acid chain: Glutamate--tRNA ligase (505 aa).

A 'HIGH' region motif is present at residues 12 to 22 (PSPTGDPHVGT). The 'KMSKS' region motif lies at 253–257 (KLSKR). ATP is bound at residue lysine 256.

This sequence belongs to the class-I aminoacyl-tRNA synthetase family. Glutamate--tRNA ligase type 1 subfamily. As to quaternary structure, monomer.

The protein resides in the cytoplasm. The enzyme catalyses tRNA(Glu) + L-glutamate + ATP = L-glutamyl-tRNA(Glu) + AMP + diphosphate. Its function is as follows. Catalyzes the attachment of glutamate to tRNA(Glu) in a two-step reaction: glutamate is first activated by ATP to form Glu-AMP and then transferred to the acceptor end of tRNA(Glu). The sequence is that of Glutamate--tRNA ligase from Chlamydia caviae (strain ATCC VR-813 / DSM 19441 / 03DC25 / GPIC) (Chlamydophila caviae).